Reading from the N-terminus, the 227-residue chain is Deoxyribose-phosphate aldolase (227 aa).

Asp-84 functions as the Proton donor/acceptor in the catalytic mechanism. The active-site Schiff-base intermediate with acetaldehyde is the Lys-146. The Proton donor/acceptor role is filled by Lys-188.

This sequence belongs to the DeoC/FbaB aldolase family. DeoC type 1 subfamily.

The protein resides in the cytoplasm. It catalyses the reaction 2-deoxy-D-ribose 5-phosphate = D-glyceraldehyde 3-phosphate + acetaldehyde. It functions in the pathway carbohydrate degradation; 2-deoxy-D-ribose 1-phosphate degradation; D-glyceraldehyde 3-phosphate and acetaldehyde from 2-deoxy-alpha-D-ribose 1-phosphate: step 2/2. Catalyzes a reversible aldol reaction between acetaldehyde and D-glyceraldehyde 3-phosphate to generate 2-deoxy-D-ribose 5-phosphate. This Pyrobaculum islandicum (strain DSM 4184 / JCM 9189 / GEO3) protein is Deoxyribose-phosphate aldolase.